Here is a 175-residue protein sequence, read N- to C-terminus: T-cell surface glycoprotein CD3 epsilon chain (175 aa).

Residues 1-21 (MRCEVPLPLLGLLLCVVGAAA) form the signal peptide. The Extracellular segment spans residues 22-100 (QGGQEEFAVE…VCANCEELDT (79 aa)). The helical transmembrane segment at 101 to 121 (FTVVGIIAADLLITLGVLILV) threads the bilayer. The Cytoplasmic portion of the chain corresponds to 122 to 175 (YYFSKNKKGQSRAAAGSRPRAQKMRRPPPVPNPDYEPIRKGQRDVYAGLEHRGF). Positions 133–163 (RAAAGSRPRAQKMRRPPPVPNPDYEPIRKGQ) are disordered. An ITAM domain is found at 146-173 (RRPPPVPNPDYEPIRKGQRDVYAGLEHR).

As to quaternary structure, the TCR/CD3 complex of T-lymphocytes consists of either a TCR alpha/beta or TCR gamma/delta heterodimer coexpressed at the cell surface with the invariant subunits of CD3 labeled gamma, delta, epsilon, zeta, and eta.

It is found in the cell membrane. In terms of biological role, the CD3 complex mediates signal transduction, resulting in T-cell activation and proliferation. Required for normal immune responses. This Gallus gallus (Chicken) protein is T-cell surface glycoprotein CD3 epsilon chain (CD3E).